The primary structure comprises 330 residues: Putative aminopeptidase (330 aa).

The a divalent metal cation site is built by His-65 and Asp-168. Residue Glu-198 is the Proton acceptor of the active site. Glu-199, Asp-221, and His-307 together coordinate a divalent metal cation.

It belongs to the peptidase M42 family. Requires a divalent metal cation as cofactor.

The polypeptide is Putative aminopeptidase (celM) (Acetivibrio thermocellus (Hungateiclostridium thermocellum)).